Consider the following 158-residue polypeptide: Transcription factor bHLH146 (158 aa).

A compositionally biased stretch (low complexity) spans 77–90; it reads SSSSNPTTTTSSSS. Positions 77–110 are disordered; that stretch reads SSSSNPTTTTSSSSDGIRILERPDKEGGNEEGGI. Positions 94-110 are enriched in basic and acidic residues; that stretch reads RILERPDKEGGNEEGGI. Residues 94–143 form the bHLH; atypical domain; the sequence is RILERPDKEGGNEEGGIEERLRELKKLLPGGEEMNVEEMLSEIGNYIKCL.

This sequence belongs to the bHLH protein family.

The protein resides in the nucleus. This is Transcription factor bHLH146 (BHLH146) from Arabidopsis thaliana (Mouse-ear cress).